The chain runs to 219 residues: Ribonuclease HII (219 aa).

The 190-residue stretch at 30–219 (RVIAGIDEAG…VREHVTCPSS (190 aa)) folds into the RNase H type-2 domain. Residues D36, E37, and D128 each coordinate a divalent metal cation.

The protein belongs to the RNase HII family. Requires Mn(2+) as cofactor. Mg(2+) serves as cofactor.

It localises to the cytoplasm. The catalysed reaction is Endonucleolytic cleavage to 5'-phosphomonoester.. Functionally, endonuclease that specifically degrades the RNA of RNA-DNA hybrids. The polypeptide is Ribonuclease HII (Pelobacter propionicus (strain DSM 2379 / NBRC 103807 / OttBd1)).